Consider the following 101-residue polypeptide: Pore-forming peptide amoebapore C (101 aa).

Residues methionine 1–glutamate 24 form the signal peptide. The Saposin B-type domain occupies isoleucine 25 to cysteine 101. Disulfide bonds link cysteine 29–cysteine 101, cysteine 32–cysteine 95, and cysteine 59–cysteine 70.

In terms of assembly, monomer. Homodimer. Hexamer; formed during insertion in the membrane.

It is found in the cytoplasmic granule. Functionally, forms pores in the cell membrane of host cells. Has antibacterial activity against M.luteus, no activity against E.coli. Implicated in the cytolytic activity of the parasite. This is Pore-forming peptide amoebapore C from Entamoeba histolytica (strain ATCC 30459 / HM-1:IMSS / ABRM).